The primary structure comprises 373 residues: G protein-coupled receptor 137Ba (373 aa).

At 1–15 (MQKDSLPTLSPAVPP) the chain is on the lumenal side. Residues 16–36 (YVMLGLTVAYTIFYCLLFVFV) traverse the membrane as a helical segment. The Cytoplasmic segment spans residues 37 to 55 (YVQLWLVLRYRHKRFSYQT). A helical membrane pass occupies residues 56–76 (VFLFLCLLWAALRALLFSFYF). At 77–84 (KNCVTANT) the chain is on the lumenal side. The helical transmembrane segment at 85–105 (LGPFCFWLLYCFPVCLQFFTL) threads the bilayer. The Cytoplasmic portion of the chain corresponds to 106-135 (SLMNLYFAQVIFKAKSKYSPELQKYRLPLY). A helical membrane pass occupies residues 136–156 (LLFLSISLLFLLVNLTCALLV). Over 157 to 176 (KINRANTETVVLVRVTVNDS) the chain is Lumenal. Residues 177–197 (LFVLCAVSLSLCLYRIAKMSL) traverse the membrane as a helical segment. At 198 to 213 (ANIYLEAKGTSVCQVT) the chain is on the cytoplasmic side. The helical transmembrane segment at 214–234 (LIGVTVVLLYSSRACYNLVVL) threads the bilayer. The Lumenal portion of the chain corresponds to 235–268 (ALTKIKSINSFDYDWYNVSDQADLKSTLGDAGYV). Residues 269 to 289 (VFGVILFVWELLPTSLVVYFF) traverse the membrane as a helical segment. The Cytoplasmic segment spans residues 290 to 373 (RVRKPTLDRS…HLAPEELNPY (84 aa)).

Belongs to the GPR137 family.

It is found in the lysosome membrane. Its function is as follows. Lysosomal integral membrane protein that regulates the localization and activity of mTORC1, a signaling complex promoting cell growth in response to growth factors, energy levels, and amino acids. Interacts with Rag GTPases and increases the lysosomial localization and activity of Rag GTPases and thereby regulates mTORC1 translocation and activity in lysosome. Also acts as a negative regulator of osteoclast activity. May be involved in interleukin-4-induced M2 macrophage polarization. In terms of biological role, also acts as a negative regulator of osteoclast activity. May be involved in interleukin-4-induced M2 macrophage polarization. The polypeptide is G protein-coupled receptor 137Ba (Danio rerio (Zebrafish)).